The following is a 275-amino-acid chain: 2,3,4,5-tetrahydropyridine-2,6-dicarboxylate N-succinyltransferase (275 aa).

Substrate is bound by residues arginine 104 and aspartate 141.

The protein belongs to the transferase hexapeptide repeat family. Homotrimer.

The protein resides in the cytoplasm. The catalysed reaction is (S)-2,3,4,5-tetrahydrodipicolinate + succinyl-CoA + H2O = (S)-2-succinylamino-6-oxoheptanedioate + CoA. Its pathway is amino-acid biosynthesis; L-lysine biosynthesis via DAP pathway; LL-2,6-diaminopimelate from (S)-tetrahydrodipicolinate (succinylase route): step 1/3. This chain is 2,3,4,5-tetrahydropyridine-2,6-dicarboxylate N-succinyltransferase, found in Tolumonas auensis (strain DSM 9187 / NBRC 110442 / TA 4).